A 390-amino-acid polypeptide reads, in one-letter code: Lipid-A-disaccharide synthase (390 aa).

It belongs to the LpxB family.

It carries out the reaction a lipid X + a UDP-2-N,3-O-bis[(3R)-3-hydroxyacyl]-alpha-D-glucosamine = a lipid A disaccharide + UDP + H(+). Its pathway is bacterial outer membrane biogenesis; LPS lipid A biosynthesis. Its function is as follows. Condensation of UDP-2,3-diacylglucosamine and 2,3-diacylglucosamine-1-phosphate to form lipid A disaccharide, a precursor of lipid A, a phosphorylated glycolipid that anchors the lipopolysaccharide to the outer membrane of the cell. The chain is Lipid-A-disaccharide synthase from Paramagnetospirillum magneticum (strain ATCC 700264 / AMB-1) (Magnetospirillum magneticum).